A 372-amino-acid polypeptide reads, in one-letter code: Glutamate 5-kinase (372 aa).

Lys-14 is a binding site for ATP. 3 residues coordinate substrate: Ser-54, Asp-141, and Asn-153. Residues 173–174 (TD) and 215–221 (TGGMATK) contribute to the ATP site. The PUA domain occupies 280-358 (RGQVVLDTGA…DNIEEILGYD (79 aa)).

Belongs to the glutamate 5-kinase family.

It localises to the cytoplasm. The catalysed reaction is L-glutamate + ATP = L-glutamyl 5-phosphate + ADP. It functions in the pathway amino-acid biosynthesis; L-proline biosynthesis; L-glutamate 5-semialdehyde from L-glutamate: step 1/2. Functionally, catalyzes the transfer of a phosphate group to glutamate to form L-glutamate 5-phosphate. In Shewanella halifaxensis (strain HAW-EB4), this protein is Glutamate 5-kinase.